The sequence spans 399 residues: Forkhead box protein Q1 (399 aa).

Positions methionine 1–arginine 112 are disordered. Residues leucine 32–glycine 54 are compositionally biased toward low complexity. Gly residues predominate over residues serine 55 to glutamate 66. Positions proline 114 to phenylalanine 205 form a DNA-binding region, fork-head. The disordered stretch occupies residues arginine 211–phenylalanine 263. The segment covering proline 228–alanine 238 has biased composition (pro residues).

The protein resides in the nucleus. In terms of biological role, plays a role in hair follicle differentiation. The sequence is that of Forkhead box protein Q1 (Foxq1) from Rattus norvegicus (Rat).